The primary structure comprises 178 residues: MNMPSEILLGARRWFASTSFSLAAVYDAPLKKAIGNIKKFSIGSLGLTYMISPVMLLLDAGGLSLGTRMSMVFLACTTTSLSTAIIHWAAKSYVSEATLKGNVLSLNTFNILGKKRLSQYTLDKLKIPDTNNSRPFANLESTTVPKRYFYLHPELATPIFNAIRQAQQPKQINKNDSK.

This is an uncharacterized protein from Schizosaccharomyces pombe (strain 972 / ATCC 24843) (Fission yeast).